The sequence spans 90 residues: Probable Fe(2+)-trafficking protein (90 aa).

Belongs to the Fe(2+)-trafficking protein family.

Functionally, could be a mediator in iron transactions between iron acquisition and iron-requiring processes, such as synthesis and/or repair of Fe-S clusters in biosynthetic enzymes. This is Probable Fe(2+)-trafficking protein from Haemophilus influenzae (strain PittEE).